We begin with the raw amino-acid sequence, 312 residues long: Formate dehydrogenase iron-sulfur subunit (312 aa).

4Fe-4S ferredoxin-type domains lie at 35-65, 97-129, 130-159, and 164-195; these read IAKL…SDIN, LEWL…QYAN, GIVD…MNPE, and YKCT…FGSK. [4Fe-4S] cluster-binding residues include cysteine 44, cysteine 47, cysteine 50, cysteine 54, cysteine 106, cysteine 109, cysteine 114, cysteine 118, cysteine 139, cysteine 142, cysteine 145, cysteine 149, cysteine 166, cysteine 169, cysteine 181, and cysteine 185.

As to quaternary structure, formate dehydrogenase is a membrane-bound complex, formed by subunits alpha, beta and gamma. Requires [4Fe-4S] cluster as cofactor.

The protein localises to the cell membrane. Its function is as follows. Allows to use formate as major electron donor during aerobic respiration. The beta chain is an electron transfer unit containing 4 cysteine clusters involved in the formation of iron-sulfur centers. Electrons are transferred from the gamma chain to the molybdenum cofactor of the alpha subunit. This Haemophilus influenzae (strain ATCC 51907 / DSM 11121 / KW20 / Rd) protein is Formate dehydrogenase iron-sulfur subunit (fdxH).